We begin with the raw amino-acid sequence, 238 residues long: Peroxisomal biogenesis factor 11 (238 aa).

Belongs to the peroxin-11 family.

It is found in the mitochondrion. The protein resides in the peroxisome membrane. Involved in peroxisomal proliferation. Promotes peroxisome division and biogenesis. This is Peroxisomal biogenesis factor 11 (pex11) from Schizosaccharomyces pombe (strain 972 / ATCC 24843) (Fission yeast).